A 350-amino-acid polypeptide reads, in one-letter code: tRNA uridine(34) hydroxylase (350 aa).

One can recognise a Rhodanese domain in the interval 146–240; the sequence is DDPDAVFIDM…YARRARAQGL (95 aa). Cysteine 200 serves as the catalytic Cysteine persulfide intermediate. Positions 319–328 are enriched in basic and acidic residues; it reads RRRRAGRENG. A disordered region spans residues 319-350; sequence RRRRAGRENGNKIFNKSRGRLNSKLSIPDPAE.

This sequence belongs to the TrhO family.

The catalysed reaction is uridine(34) in tRNA + AH2 + O2 = 5-hydroxyuridine(34) in tRNA + A + H2O. Its function is as follows. Catalyzes oxygen-dependent 5-hydroxyuridine (ho5U) modification at position 34 in tRNAs. This is tRNA uridine(34) hydroxylase from Salmonella typhimurium (strain LT2 / SGSC1412 / ATCC 700720).